Here is a 338-residue protein sequence, read N- to C-terminus: Arginase, mitochondrial (338 aa).

A mitochondrion-targeting transit peptide spans 1 to 15 (MSTIARRGFHYMQRL). Residues S73 and 92–95 (DSTN) each bind L-ornithine. Mn(2+)-binding residues include H157, D181, H183, and D185. 185–187 (DLY) lines the L-ornithine pocket. Residue 191–193 (EGN) participates in substrate binding. Residue S220 coordinates L-ornithine. Residues D266 and D268 each coordinate Mn(2+). E309 is a substrate binding site.

This sequence belongs to the arginase family. In terms of assembly, forms homohexamers. Requires Mn(2+) as cofactor.

It localises to the mitochondrion. The catalysed reaction is L-arginine + H2O = urea + L-ornithine. It carries out the reaction agmatine + H2O = urea + putrescine. It functions in the pathway nitrogen metabolism; urea cycle; L-ornithine and urea from L-arginine: step 1/1. Its pathway is amine and polyamine biosynthesis; putrescine biosynthesis via agmatine pathway; putrescine from agmatine: step 1/1. Catalyzes the hydrolysis of L-arginine to urea and L-ornithine. The latter can be utilized in the urea cycle or as a precursor for the synthesis of both polyamines and proline. Possesses agmatinase activity. Catalyzes the formation of putrescine from agmatine. This is Arginase, mitochondrial from Medicago truncatula (Barrel medic).